The primary structure comprises 120 residues: Large ribosomal subunit protein uL18 (120 aa).

A compositionally biased stretch (basic and acidic residues) spans 1 to 10 (MSTPRKEQTQ). Positions 1–25 (MSTPRKEQTQKRHRRLRRHLEGTPE) are disordered.

This sequence belongs to the universal ribosomal protein uL18 family. In terms of assembly, part of the 50S ribosomal subunit; part of the 5S rRNA/L5/L18/L25 subcomplex. Contacts the 5S and 23S rRNAs.

Its function is as follows. This is one of the proteins that bind and probably mediate the attachment of the 5S RNA into the large ribosomal subunit, where it forms part of the central protuberance. This Synechococcus sp. (strain RCC307) protein is Large ribosomal subunit protein uL18.